The following is a 284-amino-acid chain: HTH-type transcriptional activator RhaR (284 aa).

One can recognise an HTH araC/xylS-type domain in the interval D181–R279. DNA-binding regions (H-T-H motif) lie at residues E198–T219 and I246–F269.

In terms of assembly, binds DNA as a dimer.

It localises to the cytoplasm. Functionally, activates expression of the rhaSR operon in response to L-rhamnose. The protein is HTH-type transcriptional activator RhaR of Pectobacterium carotovorum subsp. carotovorum (strain PC1).